Reading from the N-terminus, the 963-residue chain is Ubiquitin carboxyl-terminal hydrolase 4 (963 aa).

The DUSP domain occupies 11 to 122 (PDAETQKSEL…GQQPIVRKVV (112 aa)). The necessary for interaction with SART3 stretch occupies residues 27–216 (TLQRGAQWYL…LYLGQVLVIE (190 aa)). The short motif at 133–141 (VEVYLLELK) is the Nuclear export signal element. The Ubiquitin-like 1 domain occupies 142–226 (LCENSDPTNV…PQNEDGTWPR (85 aa)). A disordered region spans residues 220 to 255 (EDGTWPRQTLQSKSSTAPSRNFTTSPKSSASPYSSV). Over residues 225–243 (PRQTLQSKSSTAPSRNFTT) the composition is skewed to polar residues. Residues 229–295 (LQSKSSTAPS…SYNCQEPPSS (67 aa)) are required for USP4 activation by providing conformational flexibility between the DUSP and catalytic domains. The segment covering 244–255 (SPKSSASPYSSV) has biased composition (low complexity). One can recognise a USP domain in the interval 302 to 923 (CGLGNLGNTC…AAYVLFYQRR (622 aa)). The active-site Nucleophile is the C311. Residues 384–386 (PQF) are regulates ubiquitin dissociation. A necessary for interaction with RBL2 region spans residues 405–407 (LHE). S445 carries the post-translational modification Phosphoserine. Residues 459–463 (LVCPE) are necessary for interaction with RB1 and RBL2. Zn(2+) contacts are provided by C461 and C464. The 89-residue stretch at 483-571 (LKKDRVMEVF…IFVYEVCSTS (89 aa)) folds into the Ubiquitin-like 2 domain. Residues 485–775 (KDRVMEVFLV…LQPQKKKKTT (291 aa)) are interacts with DUSP and ubiquitin-like 1 domains and is required for USP4 activation. The segment at 637–698 (DEFGSSPLEP…PSETTQKKIK (62 aa)) is disordered. Residue S655 is modified to Phosphoserine. Acidic residues predominate over residues 657-666 (EGEDEEEMEH). A phosphoserine mark is found at S675 and S680. The Nuclear localization signal motif lies at 767–772 (QPQKKK). Zn(2+) contacts are provided by C799 and C802. The active-site Proton acceptor is the H881. Residues 928–963 (YKTPSLSSSGSSDGGTRPSSSQQGLGDDEACSMDTN) form a disordered region. Positions 932–948 (SLSSSGSSDGGTRPSSS) are enriched in low complexity. A compositionally biased stretch (acidic residues) spans 953–963 (GDDEACSMDTN).

Belongs to the peptidase C19 family. USP4 subfamily. Interacts with RB1 (both dephosphorylated and hypophosphorylated forms). Interacts with RBL1 and RBL2. Interacts with ADORA2A (via cytoplasmic C-terminus); the interaction is direct. Interacts with SART3; recruits USP4 to its substrate PRPF3. Post-translationally, phosphorylated at Ser-445 by PKB/AKT1 in response to EGF stimulus, promoting its ability deubiquitinate RHEB. In terms of processing, monoubiquitinated by TRIM21. Ubiquitination does not lead to its proteasomal degradation. Autodeubiquitinated.

It localises to the cytoplasm. The protein resides in the nucleus. The catalysed reaction is Thiol-dependent hydrolysis of ester, thioester, amide, peptide and isopeptide bonds formed by the C-terminal Gly of ubiquitin (a 76-residue protein attached to proteins as an intracellular targeting signal).. The completion of the deubiquitinase reaction is mediated by the DUSP and ubiquitin-like 1 domains which promotes the release of ubiquitin from the catalytic site enabling subsequent reactions to occur. In terms of biological role, deubiquitinating enzyme that removes conjugated ubiquitin from target proteins. Deubiquitinates PDPK1. Deubiquitinates TRIM21. Deubiquitinates receptor ADORA2A which increases the amount of functional receptor at the cell surface. Deubiquitinates HAS2. Deubiquitinates RHEB in response to EGF signaling, promoting mTORC1 signaling. May regulate mRNA splicing through deubiquitination of the U4 spliceosomal protein PRPF3. This may prevent its recognition by the U5 component PRPF8 thereby destabilizing interactions within the U4/U6.U5 snRNP. May also play a role in the regulation of quality control in the ER. The chain is Ubiquitin carboxyl-terminal hydrolase 4 (USP4) from Pongo abelii (Sumatran orangutan).